Here is a 222-residue protein sequence, read N- to C-terminus: Ras-related protein Rab-21 (222 aa).

An N-acetylalanine modification is found at A2. GTP-binding residues include G25, G28, K29, T30, S31, N42, D43, H45, T47, and T48. Position 30 (T30) interacts with Mg(2+). Positions 40–53 match the Switch 1 motif; it reads KFNDKHITTLQASF. Residues T48 and D71 each contribute to the Mg(2+) site. Positions 73-91 match the Switch 2 motif; the sequence is AGQERFHALGPIYYRDSNG. GTP contacts are provided by G74, N129, K130, D132, A160, and K161. Residues C218 and C219 are each lipidated (S-geranylgeranyl cysteine). Residue C219 is modified to Cysteine methyl ester. Residues 220–222 constitute a propeptide, removed in mature form; sequence SSG.

This sequence belongs to the small GTPase superfamily. Rab family. Interacts with the cytoplasmic tail of integrins ITGA1, ITGA2, ITGA5, ITGA6, ITGA11 and ITGB1; this interaction is dependent upon its GDP/GTP cycle. Interacts with RABGEF1 (via VPS9 domain). Interacts with ANKRD27. Interacts (in GTP-bound form) with VAMP8 in response to starvation; the interaction probably regulates VAMP8 endolysosomal trafficking. Interacts (active GTP-bound form) with TMED10; the interaction is indirect and regulates TMED10 abundance and localization at the Golgi. The cofactor is Mg(2+).

The protein localises to the endoplasmic reticulum membrane. Its subcellular location is the golgi apparatus. The protein resides in the trans-Golgi network. It localises to the golgi apparatus membrane. It is found in the early endosome membrane. The protein localises to the cytoplasmic vesicle membrane. Its subcellular location is the cleavage furrow. The protein resides in the cell projection. It localises to the neuron projection. The catalysed reaction is GTP + H2O = GDP + phosphate + H(+). Regulated by guanine nucleotide exchange factors (GEFs) including ANKRD27 and RABGEF1, which promote the exchange of bound GDP for free GTP. Regulated by GTPase activating proteins (GAPs) which increase the GTP hydrolysis activity. Inhibited by GDP dissociation inhibitors (GDIs). The small GTPases Rab are key regulators of intracellular membrane trafficking, from the formation of transport vesicles to their fusion with membranes. Rabs cycle between an inactive GDP-bound form and an active GTP-bound form that is able to recruit to membranes different sets of downstream effectors directly responsible for vesicle formation, movement, tethering and fusion. RAB21 is involved in membrane trafficking control. Regulates integrin internalization and recycling, but does not influence the traffic of endosomally translocated receptors in general. As a result, may regulate cell adhesion and migration. During the mitosis of adherent cells, controls the endosomal trafficking of integrins which is required for the successful completion of cytokinesis. Involved in neurite growth. Following SBF2/MTMT13-mediated activation in response to starvation-induced autophagy, binds to and regulates SNARE protein VAMP8 endolysosomal transport required for SNARE-mediated autophagosome-lysosome fusion. Modulates protein levels of the cargo receptors TMED2 and TMED10, and required for appropriate Golgi localization of TMED10. The chain is Ras-related protein Rab-21 (RAB21) from Bos taurus (Bovine).